Here is a 183-residue protein sequence, read N- to C-terminus: uncharacterized protein (183 aa).

Disordered regions lie at residues 1–44 (MPFY…VMTA), 68–137 (GRAG…LGLR), and 163–183 (RDDP…VWPE).

This is an uncharacterized protein from Dryophytes versicolor (chameleon treefrog).